The chain runs to 611 residues: UPF0508 protein SCY_3114 (611 aa).

It belongs to the UPF0508 family.

This Saccharomyces cerevisiae (strain YJM789) (Baker's yeast) protein is UPF0508 protein SCY_3114.